The chain runs to 398 residues: Phosphoglycerate kinase (398 aa).

Residues 21–23 (DFN), arginine 36, 59–62 (HFGR), arginine 117, and arginine 150 contribute to the substrate site. Residues lysine 200, glutamate 321, and 351–354 (GGDS) each bind ATP.

The protein belongs to the phosphoglycerate kinase family. Monomer.

It is found in the cytoplasm. It carries out the reaction (2R)-3-phosphoglycerate + ATP = (2R)-3-phospho-glyceroyl phosphate + ADP. The protein operates within carbohydrate degradation; glycolysis; pyruvate from D-glyceraldehyde 3-phosphate: step 2/5. In Wolbachia pipientis wMel, this protein is Phosphoglycerate kinase.